A 199-amino-acid polypeptide reads, in one-letter code: Pyridoxine/pyridoxamine 5'-phosphate oxidase (199 aa).

Residues 44–49 (RTVLLK), 59–60 (YT), lysine 66, and glutamine 91 each bind FMN. Lysine 49 serves as a coordination point for substrate. 3 residues coordinate substrate: tyrosine 109, arginine 113, and serine 117. FMN-binding positions include 126–127 (QS) and tryptophan 171. 177–179 (RLH) provides a ligand contact to substrate. Arginine 181 is a binding site for FMN.

Belongs to the pyridoxamine 5'-phosphate oxidase family. As to quaternary structure, homodimer. FMN is required as a cofactor.

It carries out the reaction pyridoxamine 5'-phosphate + O2 + H2O = pyridoxal 5'-phosphate + H2O2 + NH4(+). It catalyses the reaction pyridoxine 5'-phosphate + O2 = pyridoxal 5'-phosphate + H2O2. It participates in cofactor metabolism; pyridoxal 5'-phosphate salvage; pyridoxal 5'-phosphate from pyridoxamine 5'-phosphate: step 1/1. It functions in the pathway cofactor metabolism; pyridoxal 5'-phosphate salvage; pyridoxal 5'-phosphate from pyridoxine 5'-phosphate: step 1/1. Functionally, catalyzes the oxidation of either pyridoxine 5'-phosphate (PNP) or pyridoxamine 5'-phosphate (PMP) into pyridoxal 5'-phosphate (PLP). The polypeptide is Pyridoxine/pyridoxamine 5'-phosphate oxidase (Xanthomonas axonopodis pv. citri (strain 306)).